We begin with the raw amino-acid sequence, 675 residues long: Transmembrane protein 232 (675 aa).

A helical membrane pass occupies residues 163 to 183 (LVKIGYLIFLRLFVFFLHGHL). Residues 598 to 634 (WQKDMEARKREEEAYKAQNQKDKEEKEKIHFQEIMKQ) are a coiled coil. A disordered region spans residues 605 to 624 (RKREEEAYKAQNQKDKEEKE).

As to expression, high expression in the testis and weak expression levels in the spleen, liver, brain, uterus, lung, epididymis and kidney. Not detected in the heart or ovary.

Its subcellular location is the membrane. Plays a critical role for male fertility and sperm motility by regulating sperm cytoplasm removal and maintaining axoneme integrity. This chain is Transmembrane protein 232 (Tmem232), found in Mus musculus (Mouse).